The chain runs to 636 residues: MTYELLNTIDDPADLRRLDRRQLGPLANELRAFVLDSVSQTGGHLSSNLGTVELTIALHYVFNTPEDRIVWDVGHQSYPHKILTGRRDQMGSLRQLDGISGFPRRSESPYDTFGTAHSSTSISAALGMALGAKTKGEDRVAIAVIGDGAMSAGMAFEAMNNAGVYKDLPLVVVLNDNDMSISPPVGALNRYLARLMSGQFYAATKKGVEKLLSVAPPVLEFAKRFEEHTKGMFVPATMFEEFGFNYIGPIDGHDLESLVPTLQNIRQRAREGGGPQFLHVVTKKGQGYKLAEADPILYHGPGKFNPQEGIKPSGRPAKVTYTQVFGQWLCDMAAADKRLVGITPAMREGSGMVEFEQRFPDRYYDVGIAEQHAVTFAGGLACEGLKPVVAIYSTFLQRGYDQLIHDVALQNLPVVFALDRAGLVGADGATHAGAYDIAYLRCIPNMMVMTPADENECRQLLSTAFAQDCPTAVRYPRGAGTGVTVQPTLEPLPVGKAEVRRTSTAPAGQRVAILAFGSMVAPASAAAERLDATVVNMRFVKPLDVACVLEMARTHDFVVTAEEGCVMGGAGSACLEALAAAGVATPVLQLGLPDRFVDHGDHAALLAQCGLDANGILASIRERFAVQPRAAAPRVA.

Thiamine diphosphate-binding positions include histidine 75 and 116–118; that span reads AHS. Position 147 (aspartate 147) interacts with Mg(2+). Thiamine diphosphate is bound by residues 148-149, asparagine 177, tyrosine 288, and glutamate 370; that span reads GA. Asparagine 177 is a Mg(2+) binding site.

This sequence belongs to the transketolase family. DXPS subfamily. In terms of assembly, homodimer. It depends on Mg(2+) as a cofactor. Thiamine diphosphate is required as a cofactor.

It catalyses the reaction D-glyceraldehyde 3-phosphate + pyruvate + H(+) = 1-deoxy-D-xylulose 5-phosphate + CO2. The protein operates within metabolic intermediate biosynthesis; 1-deoxy-D-xylulose 5-phosphate biosynthesis; 1-deoxy-D-xylulose 5-phosphate from D-glyceraldehyde 3-phosphate and pyruvate: step 1/1. Catalyzes the acyloin condensation reaction between C atoms 2 and 3 of pyruvate and glyceraldehyde 3-phosphate to yield 1-deoxy-D-xylulose-5-phosphate (DXP). This is 1-deoxy-D-xylulose-5-phosphate synthase from Ralstonia pickettii (strain 12J).